The sequence spans 594 residues: UV-stimulated scaffold protein A homolog (594 aa).

The segment at 24–170 (RKNLNRFIRE…VTLKKTKFVD (147 aa)) is VHS-like. A coiled-coil region spans residues 170–198 (DYENGAKKIEAERKRKKILEERKMKMIEN). The UVSSA-type zinc finger occupies 466–493 (RKVCLAKMKSGKLCPRKDYYTCPLHGKI). Residues C469, C479, C487, and H490 each contribute to the Zn(2+) site. Positions 503-540 (INEEDRLEENYRKEQNHLKEADKIRQMIEKEYESKTKR) form a coiled coil. The segment at 533–558 (EYESKTKRRKKHDVDTTASEDVRNRL) is disordered. Positions 544–558 (HDVDTTASEDVRNRL) are enriched in basic and acidic residues.

It belongs to the UVSSA family.

It is found in the chromosome. Its function is as follows. Factor involved in transcription-coupled nucleotide excision repair (TC-NER) in response to UV damage. TC-NER allows RNA polymerase II-blocking lesions to be rapidly removed from the transcribed strand of active genes. The polypeptide is UV-stimulated scaffold protein A homolog (Caenorhabditis elegans).